We begin with the raw amino-acid sequence, 196 residues long: MATNYSANQYEKPFSPKYLQNWSLAKPTKERISSHEGYTQIIANDRGHLLPSVPRSKASPWGSFMGTWQMPLKVPPARATLTSRTAAGAASLTRWIQKNPDLLKASNGLRPEIFGKPHDPDSQKKLRKSITKTVQQAPSPTIIPSSPASNLSSPDQLQSSHPSAGHTPGPQSPLNSPKCPPGSPCLPHAGRNLAEV.

The tract at residues 107-196 is disordered; the sequence is NGLRPEIFGK…PHAGRNLAEV (90 aa). Residues 113-124 are compositionally biased toward basic and acidic residues; sequence IFGKPHDPDSQK. Residues 137-149 show a composition bias toward low complexity; it reads APSPTIIPSSPAS. Over residues 150-162 the composition is skewed to polar residues; that stretch reads NLSSPDQLQSSHP.

Belongs to the Flattop family. In terms of assembly, microtubule inner protein component of sperm flagellar doublet microtubules. Interacts with DLG3. As to expression, expressed in trachea multiciliated cells.

Its subcellular location is the cytoplasm. The protein localises to the cytoskeleton. It localises to the cilium basal body. The protein resides in the cell projection. It is found in the cilium. Its subcellular location is the apical cell membrane. The protein localises to the cilium axoneme. It localises to the flagellum axoneme. Functionally, microtubule inner protein (MIP) part of the dynein-decorated doublet microtubules (DMTs) in cilia axoneme. Acts as a regulator of cilium basal body docking and positioning in mono- and multiciliated cells. Regulates basal body docking and cilia formation in multiciliated lung cells. Regulates kinocilium positioning and stereocilia bundle morphogenesis in the inner ear. The sequence is that of Protein Flattop from Bos taurus (Bovine).